The following is a 379-amino-acid chain: Cyclin-dependent kinase-like 4 (379 aa).

In terms of domain architecture, Protein kinase spans 4–286 (YEKLAKTGEG…CSQLLESSYF (283 aa)). ATP-binding positions include 10 to 18 (TGEGSYGVV) and K33. Residues 45-51 (KKIALRE) carry the [NKR]KIAxRE motif. The active-site Proton acceptor is D126.

The protein belongs to the protein kinase superfamily. CMGC Ser/Thr protein kinase family. CDC2/CDKX subfamily.

The protein localises to the cytoplasm. The enzyme catalyses L-seryl-[protein] + ATP = O-phospho-L-seryl-[protein] + ADP + H(+). It catalyses the reaction L-threonyl-[protein] + ATP = O-phospho-L-threonyl-[protein] + ADP + H(+). The chain is Cyclin-dependent kinase-like 4 (CDKL4) from Homo sapiens (Human).